A 175-amino-acid polypeptide reads, in one-letter code: Large ribosomal subunit protein bL17m (175 aa).

The N-terminal 8 residues, 1–8 (MRLSVAAA), are a transit peptide targeting the mitochondrion. The interval 155-175 (DLRQSQEASNHSSHTAQTPGI) is disordered. The span at 161 to 175 (EASNHSSHTAQTPGI) shows a compositional bias: polar residues.

This sequence belongs to the bacterial ribosomal protein bL17 family. As to quaternary structure, component of the mitochondrial large ribosomal subunit (mt-LSU). Mature mammalian 55S mitochondrial ribosomes consist of a small (28S) and a large (39S) subunit. The 28S small subunit contains a 12S ribosomal RNA (12S mt-rRNA) and 30 different proteins. The 39S large subunit contains a 16S rRNA (16S mt-rRNA), a copy of mitochondrial valine transfer RNA (mt-tRNA(Val)), which plays an integral structural role, and 52 different proteins. As to expression, detected in adrenal gland, mammary gland and adipose tissue.

The protein resides in the mitochondrion. This chain is Large ribosomal subunit protein bL17m (MRPL17), found in Homo sapiens (Human).